A 117-amino-acid polypeptide reads, in one-letter code: Aspartate 1-decarboxylase (117 aa).

Catalysis depends on S25, which acts as the Schiff-base intermediate with substrate; via pyruvic acid. Position 25 is a pyruvic acid (Ser) (S25). Residue T57 participates in substrate binding. The active-site Proton donor is the Y58. 73–75 (GAA) is a substrate binding site.

This sequence belongs to the PanD family. In terms of assembly, heterooctamer of four alpha and four beta subunits. Pyruvate is required as a cofactor. In terms of processing, is synthesized initially as an inactive proenzyme, which is activated by self-cleavage at a specific serine bond to produce a beta-subunit with a hydroxyl group at its C-terminus and an alpha-subunit with a pyruvoyl group at its N-terminus.

It localises to the cytoplasm. It catalyses the reaction L-aspartate + H(+) = beta-alanine + CO2. It participates in cofactor biosynthesis; (R)-pantothenate biosynthesis; beta-alanine from L-aspartate: step 1/1. In terms of biological role, catalyzes the pyruvoyl-dependent decarboxylation of aspartate to produce beta-alanine. The polypeptide is Aspartate 1-decarboxylase (Bacteroides thetaiotaomicron (strain ATCC 29148 / DSM 2079 / JCM 5827 / CCUG 10774 / NCTC 10582 / VPI-5482 / E50)).